We begin with the raw amino-acid sequence, 229 residues long: MPKKKAFTPLPYLASIVFLPWWISLSFNKSLESWITNWWNTRQSEIFLNDIQEKNVLEKFIELEELFLLDEMIKEYPETHIQKLRIGIHKETIELVKIHNEGHIHTILHFSTNITCFAILSGYSILGNEELVILNSWLQEFLYNLSDTIKAFSILLLTDLCIGFHSPHGWELMISSVYRDFGFAHNDPIISGLVSTFPVILDTIFKYWIFRYLNRVSPSLVVIYHSMND.

The next 4 membrane-spanning stretches (helical) occupy residues 7 to 27 (FTPL…SLSF), 114 to 134 (ITCF…LVIL), 154 to 174 (ILLL…ELMI), and 189 to 209 (IISG…KYWI).

This sequence belongs to the CemA family.

It localises to the plastid. It is found in the chloroplast inner membrane. It carries out the reaction K(+)(in) + H(+)(out) = K(+)(out) + H(+)(in). Functionally, contributes to K(+)/H(+) antiport activity by supporting proton efflux to control proton extrusion and homeostasis in chloroplasts in a light-dependent manner to modulate photosynthesis. Prevents excessive induction of non-photochemical quenching (NPQ) under continuous-light conditions. Indirectly promotes efficient inorganic carbon uptake into chloroplasts. The chain is Potassium/proton antiporter CemA from Platanus occidentalis (Sycamore).